The sequence spans 180 residues: Fanconi anemia core complex-associated protein 20 (180 aa).

The span at 1-17 (MEAARRPRLGLSRRRPR) shows a compositional bias: basic residues. Disordered regions lie at residues 1–28 (MEAA…GRPW) and 106–135 (GAGG…VEQQ). A phosphoserine mark is found at serine 113 and serine 137. Residues 144–180 (LRSCPMCQKEFAPRLTQLDVDSHLAQCLAESTEDVTW) form a UBZ2-type zinc finger. Residues cysteine 147, cysteine 150, histidine 166, and cysteine 170 each coordinate Zn(2+).

As to quaternary structure, component of the Fanconi anemia (FA) complex. Interacts with FANCA; interaction is direct. Interacts with REV1. Reported to bind monoubiquitinated REV1; however it binds better to non-ubiquitinated REV1.

It localises to the nucleus. Its subcellular location is the chromosome. In terms of biological role, component of the Fanconi anemia (FA) complex required to recruit the FA complex to DNA interstrand cross-links (ICLs) and promote ICLs repair. Following DNA damage recognizes and binds 'Lys-63'-linked ubiquitin generated by RNF8 at ICLs and recruits other components of the FA complex. Promotes translesion synthesis via interaction with REV1. This is Fanconi anemia core complex-associated protein 20 from Homo sapiens (Human).